We begin with the raw amino-acid sequence, 110 residues long: MDIGRAVRFLRKRQGWTQQQLADFSHTSKSNISNLENGNQGYSPAILEYLAKAFNCSVSQIFLLAENMDNEGNLLKDWQHMPIDVLFIQLPQEVQCQLKHLIFTLIDTKK.

The 55-residue stretch at 7-61 (VRFLRKRQGWTQQQLADFSHTSKSNISNLENGNQGYSPAILEYLAKAFNCSVSQI) folds into the HTH cro/C1-type domain. Residues 18 to 37 (QQQLADFSHTSKSNISNLEN) constitute a DNA-binding region (H-T-H motif).

Functionally, represses transcription of the PilB-specific inhibitory protein CpiA. The chain is Competence pilus inhibition repressor from Acinetobacter baylyi (strain ATCC 33305 / BD413 / ADP1).